A 177-amino-acid polypeptide reads, in one-letter code: RNA pyrophosphohydrolase (177 aa).

In terms of domain architecture, Nudix hydrolase spans 6–149 (GYRPNVGIVI…KRDVYRRVMK (144 aa)). The short motif at 38-59 (GGINAGETAEQAMYRELFEEVG) is the Nudix box element.

It belongs to the Nudix hydrolase family. RppH subfamily. A divalent metal cation serves as cofactor.

Its function is as follows. Accelerates the degradation of transcripts by removing pyrophosphate from the 5'-end of triphosphorylated RNA, leading to a more labile monophosphorylated state that can stimulate subsequent ribonuclease cleavage. In Edwardsiella ictaluri (strain 93-146), this protein is RNA pyrophosphohydrolase.